The sequence spans 131 residues: Fumarate reductase subunit C (131 aa).

3 helical membrane-spanning segments follow: residues 30–50 (EGTA…LFAL), 63–83 (FLQN…ALLH), and 109–129 (IIKS…FVAL).

The protein belongs to the FrdC family. Part of an enzyme complex containing four subunits: a flavoprotein (FrdA), an iron-sulfur protein (FrdB), and two hydrophobic anchor proteins (FrdC and FrdD).

The protein localises to the cell inner membrane. Functionally, two distinct, membrane-bound, FAD-containing enzymes are responsible for the catalysis of fumarate and succinate interconversion; fumarate reductase is used in anaerobic growth, and succinate dehydrogenase is used in aerobic growth. Anchors the catalytic components of the fumarate reductase complex to the cell inner membrane, binds quinones. This is Fumarate reductase subunit C from Escherichia coli O17:K52:H18 (strain UMN026 / ExPEC).